Consider the following 440-residue polypeptide: Xylose isomerase (440 aa).

Active-site residues include H100 and D103. Mg(2+) contacts are provided by E231, E267, H270, D295, D306, D308, and D338.

Belongs to the xylose isomerase family. As to quaternary structure, homotetramer. The cofactor is Mg(2+).

It localises to the cytoplasm. It catalyses the reaction alpha-D-xylose = alpha-D-xylulofuranose. In Burkholderia vietnamiensis (strain G4 / LMG 22486) (Burkholderia cepacia (strain R1808)), this protein is Xylose isomerase.